A 257-amino-acid polypeptide reads, in one-letter code: NAD-capped RNA hydrolase NudC (257 aa).

Residue Arg-69 coordinates substrate. 2 residues coordinate Zn(2+): Cys-98 and Cys-101. A substrate-binding site is contributed by Glu-111. Residues Cys-116 and Cys-119 each coordinate Zn(2+). A substrate-binding site is contributed by Tyr-124. Residues 125-248 (PQIAPCIIVA…TVARRLIEDT (124 aa)) form the Nudix hydrolase domain. Positions 158, 174, and 178 each coordinate a divalent metal cation. The short motif at 159–180 (GFVEVGETLEQAAAREIFEESR) is the Nudix box element. 192-199 (QPWPFPHS) contributes to the substrate binding site. Residue Glu-219 participates in a divalent metal cation binding. Residue Ala-241 coordinates substrate.

It belongs to the Nudix hydrolase family. NudC subfamily. As to quaternary structure, homodimer. Mg(2+) is required as a cofactor. Requires Mn(2+) as cofactor. The cofactor is Zn(2+).

It catalyses the reaction a 5'-end NAD(+)-phospho-ribonucleoside in mRNA + H2O = a 5'-end phospho-adenosine-phospho-ribonucleoside in mRNA + beta-nicotinamide D-ribonucleotide + 2 H(+). The enzyme catalyses NAD(+) + H2O = beta-nicotinamide D-ribonucleotide + AMP + 2 H(+). The catalysed reaction is NADH + H2O = reduced beta-nicotinamide D-ribonucleotide + AMP + 2 H(+). In terms of biological role, mRNA decapping enzyme that specifically removes the nicotinamide adenine dinucleotide (NAD) cap from a subset of mRNAs by hydrolyzing the diphosphate linkage to produce nicotinamide mononucleotide (NMN) and 5' monophosphate mRNA. The NAD-cap is present at the 5'-end of some mRNAs and stabilizes RNA against 5'-processing. Has preference for mRNAs with a 5'-end purine. Catalyzes the hydrolysis of a broad range of dinucleotide pyrophosphates. This is NAD-capped RNA hydrolase NudC from Edwardsiella ictaluri (strain 93-146).